The sequence spans 401 residues: Nicotinamide/nicotinic acid mononucleotide adenylyltransferase 1 (401 aa).

2 disordered regions span residues 1–30 (MDPT…KIPK) and 48–123 (APFN…RGVQ). A compositionally biased stretch (basic residues) spans 52 to 69 (IKRKKKHPKHHHHHHHSR). 4 positions are modified to phosphoserine: Ser91, Ser95, Ser96, and Ser111. NAD(+) contacts are provided by Ser173 and Phe174. His181 provides a ligand contact to ATP. Residues Thr253, Gly288, Asp290, Trp301, Arg320, and Asn351 each contribute to the NAD(+) site. 356–359 (TKVR) lines the ATP pocket.

It belongs to the eukaryotic NMN adenylyltransferase family. Homotetramer. Requires Ni(2+) as cofactor.

It is found in the cytoplasm. It localises to the nucleus. The catalysed reaction is beta-nicotinamide D-ribonucleotide + ATP + H(+) = diphosphate + NAD(+). It catalyses the reaction nicotinate beta-D-ribonucleotide + ATP + H(+) = deamido-NAD(+) + diphosphate. It functions in the pathway cofactor biosynthesis; NAD(+) biosynthesis; deamido-NAD(+) from nicotinate D-ribonucleotide: step 1/1. Its pathway is cofactor biosynthesis; NAD(+) biosynthesis; NAD(+) from nicotinamide D-ribonucleotide: step 1/1. Its function is as follows. Catalyzes the formation of NAD(+) from nicotinamide mononucleotide (NMN) and ATP. Can also use the deamidated form; nicotinic acid mononucleotide (NaMN) as substrate to form deamido-NAD(+) (NaAD). Key enzyme in both de novo and salvage pathways for NAD(+) biosynthesis. Predominantly acts in the salvage pathways via NMN. This Saccharomyces cerevisiae (strain ATCC 204508 / S288c) (Baker's yeast) protein is Nicotinamide/nicotinic acid mononucleotide adenylyltransferase 1.